The following is a 266-amino-acid chain: Dihydropteroate synthase (266 aa).

One can recognise a Pterin-binding domain in the interval 12–260; it reads AAIMGILNVT…DVKANQEIVA (249 aa). A Mg(2+)-binding site is contributed by Asn-19. (7,8-dihydropterin-6-yl)methyl diphosphate contacts are provided by residues Thr-59, Asp-93, Asn-112, Asp-176, Lys-212, and 248–250; that span reads RVH.

It belongs to the DHPS family. Homodimer or homotrimer. Requires Mg(2+) as cofactor.

It catalyses the reaction (7,8-dihydropterin-6-yl)methyl diphosphate + 4-aminobenzoate = 7,8-dihydropteroate + diphosphate. Its pathway is cofactor biosynthesis; tetrahydrofolate biosynthesis; 7,8-dihydrofolate from 2-amino-4-hydroxy-6-hydroxymethyl-7,8-dihydropteridine diphosphate and 4-aminobenzoate: step 1/2. In terms of biological role, catalyzes the condensation of para-aminobenzoate (pABA) with 6-hydroxymethyl-7,8-dihydropterin diphosphate (DHPt-PP) to form 7,8-dihydropteroate (H2Pte), the immediate precursor of folate derivatives. This chain is Dihydropteroate synthase (folP), found in Streptococcus pyogenes.